A 66-amino-acid polypeptide reads, in one-letter code: Large ribosomal subunit protein bL35 (66 aa).

It belongs to the bacterial ribosomal protein bL35 family.

This is Large ribosomal subunit protein bL35 from Leptospira biflexa serovar Patoc (strain Patoc 1 / Ames).